A 326-amino-acid polypeptide reads, in one-letter code: Lipoyl synthase (326 aa).

The [4Fe-4S] cluster site is built by cysteine 74, cysteine 79, cysteine 85, cysteine 100, cysteine 104, cysteine 107, and serine 314. Residues 85 to 303 (CFGRGTATFM…EEEAYKMGFS (219 aa)) form the Radical SAM core domain.

The protein belongs to the radical SAM superfamily. Lipoyl synthase family. Requires [4Fe-4S] cluster as cofactor.

It is found in the cytoplasm. It carries out the reaction [[Fe-S] cluster scaffold protein carrying a second [4Fe-4S](2+) cluster] + N(6)-octanoyl-L-lysyl-[protein] + 2 oxidized [2Fe-2S]-[ferredoxin] + 2 S-adenosyl-L-methionine + 4 H(+) = [[Fe-S] cluster scaffold protein] + N(6)-[(R)-dihydrolipoyl]-L-lysyl-[protein] + 4 Fe(3+) + 2 hydrogen sulfide + 2 5'-deoxyadenosine + 2 L-methionine + 2 reduced [2Fe-2S]-[ferredoxin]. It functions in the pathway protein modification; protein lipoylation via endogenous pathway; protein N(6)-(lipoyl)lysine from octanoyl-[acyl-carrier-protein]: step 2/2. Functionally, catalyzes the radical-mediated insertion of two sulfur atoms into the C-6 and C-8 positions of the octanoyl moiety bound to the lipoyl domains of lipoate-dependent enzymes, thereby converting the octanoylated domains into lipoylated derivatives. This chain is Lipoyl synthase, found in Acidovorax ebreus (strain TPSY) (Diaphorobacter sp. (strain TPSY)).